Consider the following 2157-residue polypeptide: Genome polyprotein (2157 aa).

The N-myristoyl glycine; by host moiety is linked to residue G2. At 2–1470 (GAQVSRQNVG…DLSIANSIIT (1469 aa)) the chain is on the cytoplasmic side. The interval 567 to 584 (PIEQNPVENYIDEVLNEV) is amphipathic alpha-helix. Residues H875 and D892 each act as for protease 2A activity in the active site. Zn(2+) contacts are provided by C909 and C911. The active-site For protease 2A activity is the C963. 2 residues coordinate Zn(2+): C969 and H971. A membrane-binding region spans residues 1095-1164 (SDSWLKKFTE…NLRAADNATQ (70 aa)). Residues 1095–1228 (SDSWLKKFTE…PPGTGKSITT (134 aa)) are oligomerization. An RNA-binding region spans residues 1116 to 1120 (GNKIS). Residues 1188-1350 (EAKRIKVLYN…YKDAQGKLNV (163 aa)) form the SF3 helicase domain. Residues C1357, C1368, and C1373 each contribute to the Zn(2+) site. The segment at 1357-1373 (CNVNTKIGNAKCCPFVC) adopts a C4-type; degenerate zinc-finger fold. An RNA-binding region spans residues 1400-1407 (EDKRRRQV). The segment at 1411 to 1416 (MSAIFQ) is oligomerization. An intramembrane segment occupies 1471 to 1486 (IIANIISIAGIIFVIY). Residues 1487 to 2157 (KLFCTLQGPY…LLKHEWYEKF (671 aa)) are Cytoplasmic-facing. Residue Y1496 is modified to O-(5'-phospho-RNA)-tyrosine. The region spanning 1515 to 1693 (GPEEEFGRSI…FSAMLLRSYF (179 aa)) is the Peptidase C3 domain. Catalysis depends on for protease 3C activity residues H1554, E1585, and C1661. The 114-residue stretch at 1925–2038 (DCIMAFDYTN…SYKYTLDMEA (114 aa)) folds into the RdRp catalytic domain. 2 residues coordinate Mg(2+): D1931 and D2024.

This sequence belongs to the picornaviruses polyprotein family. As to quaternary structure, interacts with capsid protein VP1 and capsid protein VP3 to form heterotrimeric protomers. Interacts with capsid protein VP0, and capsid protein VP3 to form heterotrimeric protomers. Five protomers subsequently associate to form pentamers which serve as building blocks for the capsid. Interacts with capsid protein VP2, capsid protein VP3 and capsid protein VP4 following cleavage of capsid protein VP0. In terms of assembly, interacts with capsid protein VP1 and capsid protein VP3 in the mature capsid. As to quaternary structure, interacts with capsid protein VP0 and capsid protein VP1 to form heterotrimeric protomers. Five protomers subsequently associate to form pentamers which serve as building blocks for the capsid. Interacts with capsid protein VP4 in the mature capsid. Interacts with protein 2C; this interaction may be important for virion morphogenesis. Interacts with capsid protein VP1 and capsid protein VP3. In terms of assembly, homodimer. As to quaternary structure, homohexamer; forms a hexameric ring structure with 6-fold symmetry characteristic of AAA+ ATPases. Interacts (via N-terminus) with host RTN3 (via reticulon domain); this interaction is important for viral replication. Interacts with capsid protein VP3; this interaction may be important for virion morphogenesis. Interacts with protein 3CD. In terms of assembly, homodimer. Interacts with host GBF1. Interacts (via GOLD domain) with host ACBD3 (via GOLD domain); this interaction allows the formation of a viral protein 3A/ACBD3 heterotetramer with a 2:2 stoichiometry, which will stimulate the recruitment of host PI4KB in order to synthesize PI4P at the viral RNA replication sites. As to quaternary structure, interacts with RNA-directed RNA polymerase. Interacts with protein 3AB and with RNA-directed RNA polymerase. In terms of assembly, interacts with Viral protein genome-linked and with protein 3CD. The cofactor is Mg(2+). Specific enzymatic cleavages in vivo by the viral proteases yield processing intermediates and the mature proteins. Post-translationally, myristoylation is required for the formation of pentamers during virus assembly. Further assembly of 12 pentamers and a molecule of genomic RNA generates the provirion. In terms of processing, during virion maturation, immature virions are rendered infectious following cleavage of VP0 into VP4 and VP2. This maturation seems to be an autocatalytic event triggered by the presence of RNA in the capsid and it is followed by a conformational change infectious virion. Myristoylation is required during RNA encapsidation and formation of the mature virus particle. Post-translationally, VPg is uridylylated by the polymerase into VPg-pUpU. This acts as a nucleotide-peptide primer for the genomic RNA replication.

It localises to the virion. The protein resides in the host cytoplasm. Its subcellular location is the host cytoplasmic vesicle membrane. The protein localises to the host nucleus. It carries out the reaction a ribonucleoside 5'-triphosphate + H2O = a ribonucleoside 5'-diphosphate + phosphate + H(+). The enzyme catalyses Selective cleavage of Tyr-|-Gly bond in the picornavirus polyprotein.. The catalysed reaction is RNA(n) + a ribonucleoside 5'-triphosphate = RNA(n+1) + diphosphate. It catalyses the reaction Selective cleavage of Gln-|-Gly bond in the poliovirus polyprotein. In other picornavirus reactions Glu may be substituted for Gln, and Ser or Thr for Gly.. Replication or transcription is subject to high level of random mutations by the nucleotide analog ribavirin. Its function is as follows. Forms an icosahedral capsid of pseudo T=3 symmetry with capsid proteins VP2 and VP3. The capsid is 300 Angstroms in diameter, composed of 60 copies of each capsid protein and enclosing the viral positive strand RNA genome. Capsid protein VP1 mainly forms the vertices of the capsid. Capsid protein VP1 interacts with host cell receptor to provide virion attachment to target host cells. This attachment induces virion internalization. Tyrosine kinases are probably involved in the entry process. After binding to its receptor, the capsid undergoes conformational changes. Capsid protein VP1 N-terminus (that contains an amphipathic alpha-helix) and capsid protein VP4 are externalized. Together, they shape a pore in the host membrane through which viral genome is translocated to host cell cytoplasm. In terms of biological role, forms an icosahedral capsid of pseudo T=3 symmetry with capsid proteins VP2 and VP3. The capsid is 300 Angstroms in diameter, composed of 60 copies of each capsid protein and enclosing the viral positive strand RNA genome. Functionally, lies on the inner surface of the capsid shell. After binding to the host receptor, the capsid undergoes conformational changes. Capsid protein VP4 is released, Capsid protein VP1 N-terminus is externalized, and together, they shape a pore in the host membrane through which the viral genome is translocated into the host cell cytoplasm. Component of immature procapsids, which is cleaved into capsid proteins VP4 and VP2 after maturation. Allows the capsid to remain inactive before the maturation step. Its function is as follows. Cysteine protease that cleaves viral polyprotein and specific host proteins. It is responsible for the autocatalytic cleavage between the P1 and P2 regions, which is the first cleavage occurring in the polyprotein. Also cleaves the host translation initiation factor EIF4G1, in order to shut down the capped cellular mRNA translation. Inhibits the host nucleus-cytoplasm protein and RNA trafficking by cleaving host members of the nuclear pores. Counteracts stress granule formation probably by antagonizing its assembly or promoting its dissassembly. In terms of biological role, plays an essential role in the virus replication cycle by acting as a viroporin. Creates a pore in the host endoplasmic reticulum and as a consequence releases Ca2+ in the cytoplasm of infected cell. In turn, high levels of cytoplasmic calcium may trigger membrane trafficking and transport of viral ER-associated proteins to viroplasms, sites of viral genome replication. Functionally, induces and associates with structural rearrangements of intracellular membranes. Displays RNA-binding, nucleotide binding and NTPase activities. May play a role in virion morphogenesis and viral RNA encapsidation by interacting with the capsid protein VP3. Localizes the viral replication complex to the surface of membranous vesicles. Together with protein 3CD binds the Cis-Active RNA Element (CRE) which is involved in RNA synthesis initiation. Acts as a cofactor to stimulate the activity of 3D polymerase, maybe through a nucleid acid chaperone activity. Its function is as follows. Localizes the viral replication complex to the surface of membranous vesicles. It inhibits host cell endoplasmic reticulum-to-Golgi apparatus transport and causes the disassembly of the Golgi complex, possibly through GBF1 interaction. This would result in depletion of MHC, trail receptors and IFN receptors at the host cell surface. Plays an essential role in viral RNA replication by recruiting ACBD3 and PI4KB at the viral replication sites, thereby allowing the formation of the rearranged membranous structures where viral replication takes place. In terms of biological role, acts as a primer for viral RNA replication and remains covalently bound to viral genomic RNA. VPg is uridylylated prior to priming replication into VPg-pUpU. The oriI viral genomic sequence may act as a template for this. The VPg-pUpU is then used as primer on the genomic RNA poly(A) by the RNA-dependent RNA polymerase to replicate the viral genome. During genome replication, the VPg-RNA linkage is removed by the host TDP2, thereby accelerating replication. During the late stage of the replication cycle, host TDP2 is excluded from sites of viral RNA synthesis and encapsidation, allowing for the generation of progeny virions. Functionally, involved in the viral replication complex and viral polypeptide maturation. It exhibits protease activity with a specificity and catalytic efficiency that is different from protease 3C. Protein 3CD lacks polymerase activity. Protein 3CD binds to the 5'UTR of the viral genome. Replicates the viral genomic RNA on the surface of intracellular membranes. May form linear arrays of subunits that propagate along a strong head-to-tail interaction called interface-I. Covalently attaches UMP to a tyrosine of VPg, which is used to prime RNA synthesis. The positive stranded RNA genome is first replicated at virus induced membranous vesicles, creating a dsRNA genomic replication form. This dsRNA is then used as template to synthesize positive stranded RNA genomes. ss(+)RNA genomes are either translated, replicated or encapsidated. Its function is as follows. Major viral protease that mediates proteolytic processing of the polyprotein. Cleaves host EIF5B, contributing to host translation shutoff. Also cleaves host PABPC1, contributing to host translation shutoff. Cleaves host NLRP1, triggers host N-glycine-mediated degradation of the autoinhibitory NLRP1 N-terminal fragment. The polypeptide is Genome polyprotein (Homo sapiens (Human)).